Here is a 274-residue protein sequence, read N- to C-terminus: NADPH-dependent 7-cyano-7-deazaguanine reductase (274 aa).

Residue 80-82 (VES) coordinates substrate. 82 to 83 (SK) contributes to the NADPH binding site. Cys-181 serves as the catalytic Thioimide intermediate. Catalysis depends on Asp-188, which acts as the Proton donor. Residue 220 to 221 (HE) coordinates substrate. 249-250 (RG) contacts NADPH.

This sequence belongs to the GTP cyclohydrolase I family. QueF type 2 subfamily. Homodimer.

The protein resides in the cytoplasm. It carries out the reaction 7-aminomethyl-7-carbaguanine + 2 NADP(+) = 7-cyano-7-deazaguanine + 2 NADPH + 3 H(+). It functions in the pathway tRNA modification; tRNA-queuosine biosynthesis. Catalyzes the NADPH-dependent reduction of 7-cyano-7-deazaguanine (preQ0) to 7-aminomethyl-7-deazaguanine (preQ1). The sequence is that of NADPH-dependent 7-cyano-7-deazaguanine reductase from Burkholderia lata (strain ATCC 17760 / DSM 23089 / LMG 22485 / NCIMB 9086 / R18194 / 383).